Consider the following 200-residue polypeptide: Lipopolysaccharide core heptose(II)-phosphate phosphatase (200 aa).

The signal sequence occupies residues 1 to 25 (MLAFCRSSLKSKKYFIILLALAAIA).

The protein belongs to the phosphoglycerate mutase family. Ais subfamily.

It localises to the periplasm. It participates in bacterial outer membrane biogenesis; lipopolysaccharide metabolism. In terms of biological role, catalyzes the dephosphorylation of heptose(II) of the outer membrane lipopolysaccharide core. This is Lipopolysaccharide core heptose(II)-phosphate phosphatase from Escherichia coli (strain SE11).